The primary structure comprises 459 residues: Bifunctional protein GlmU (459 aa).

The interval 1–229 (MSNFAIILAA…FDESLGVNDR (229 aa)) is pyrophosphorylase. UDP-N-acetyl-alpha-D-glucosamine-binding positions include 8–11 (LAAG), lysine 22, glutamine 72, and 77–78 (GT). Aspartate 102 serves as a coordination point for Mg(2+). UDP-N-acetyl-alpha-D-glucosamine-binding residues include glycine 139, glutamate 154, asparagine 169, and asparagine 227. Asparagine 227 contacts Mg(2+). The linker stretch occupies residues 230–250 (VALATAESVMRRRINHKHMVN). The interval 251–459 (GVSFVNPEAT…TRLPHHPKNQ (209 aa)) is N-acetyltransferase. UDP-N-acetyl-alpha-D-glucosamine contacts are provided by arginine 332 and lysine 350. Residue histidine 362 is the Proton acceptor of the active site. Positions 365 and 376 each coordinate UDP-N-acetyl-alpha-D-glucosamine. Residues alanine 379, 385–386 (NY), serine 404, alanine 422, and arginine 439 contribute to the acetyl-CoA site.

It in the N-terminal section; belongs to the N-acetylglucosamine-1-phosphate uridyltransferase family. The protein in the C-terminal section; belongs to the transferase hexapeptide repeat family. As to quaternary structure, homotrimer. Requires Mg(2+) as cofactor.

It localises to the cytoplasm. It carries out the reaction alpha-D-glucosamine 1-phosphate + acetyl-CoA = N-acetyl-alpha-D-glucosamine 1-phosphate + CoA + H(+). The enzyme catalyses N-acetyl-alpha-D-glucosamine 1-phosphate + UTP + H(+) = UDP-N-acetyl-alpha-D-glucosamine + diphosphate. It functions in the pathway nucleotide-sugar biosynthesis; UDP-N-acetyl-alpha-D-glucosamine biosynthesis; N-acetyl-alpha-D-glucosamine 1-phosphate from alpha-D-glucosamine 6-phosphate (route II): step 2/2. The protein operates within nucleotide-sugar biosynthesis; UDP-N-acetyl-alpha-D-glucosamine biosynthesis; UDP-N-acetyl-alpha-D-glucosamine from N-acetyl-alpha-D-glucosamine 1-phosphate: step 1/1. Its pathway is bacterial outer membrane biogenesis; LPS lipid A biosynthesis. Functionally, catalyzes the last two sequential reactions in the de novo biosynthetic pathway for UDP-N-acetylglucosamine (UDP-GlcNAc). The C-terminal domain catalyzes the transfer of acetyl group from acetyl coenzyme A to glucosamine-1-phosphate (GlcN-1-P) to produce N-acetylglucosamine-1-phosphate (GlcNAc-1-P), which is converted into UDP-GlcNAc by the transfer of uridine 5-monophosphate (from uridine 5-triphosphate), a reaction catalyzed by the N-terminal domain. The chain is Bifunctional protein GlmU from Streptococcus pneumoniae (strain 70585).